The following is a 310-amino-acid chain: Putative RING-H2 finger protein ATL53 (310 aa).

A helical membrane pass occupies residues 62 to 82; the sequence is VIAIFGIFATAFLLAAYYTLV. An RING-type; atypical zinc finger spans residues 155-197; the sequence is CSICLGEFNEDESLRLLPKCNHTFHVVCIDRWLKSHSNCPLCR.

It belongs to the RING-type zinc finger family. ATL subfamily.

Its subcellular location is the membrane. It carries out the reaction S-ubiquitinyl-[E2 ubiquitin-conjugating enzyme]-L-cysteine + [acceptor protein]-L-lysine = [E2 ubiquitin-conjugating enzyme]-L-cysteine + N(6)-ubiquitinyl-[acceptor protein]-L-lysine.. Its pathway is protein modification; protein ubiquitination. The polypeptide is Putative RING-H2 finger protein ATL53 (ATL53) (Arabidopsis thaliana (Mouse-ear cress)).